The following is a 310-amino-acid chain: Ribosomal RNA small subunit methyltransferase H (310 aa).

S-adenosyl-L-methionine contacts are provided by residues 32–34 (AGH), Asp51, Phe84, Asp102, and Gln109.

This sequence belongs to the methyltransferase superfamily. RsmH family.

Its subcellular location is the cytoplasm. It catalyses the reaction cytidine(1402) in 16S rRNA + S-adenosyl-L-methionine = N(4)-methylcytidine(1402) in 16S rRNA + S-adenosyl-L-homocysteine + H(+). Its function is as follows. Specifically methylates the N4 position of cytidine in position 1402 (C1402) of 16S rRNA. In Campylobacter hominis (strain ATCC BAA-381 / DSM 21671 / CCUG 45161 / LMG 19568 / NCTC 13146 / CH001A), this protein is Ribosomal RNA small subunit methyltransferase H.